Consider the following 253-residue polypeptide: DNA polymerase sliding clamp (253 aa).

Belongs to the PCNA family. As to quaternary structure, homotrimer. The subunits circularize to form a toroid; DNA passes through its center. Replication factor C (RFC) is required to load the toroid on the DNA.

Sliding clamp subunit that acts as a moving platform for DNA processing. Responsible for tethering the catalytic subunit of DNA polymerase and other proteins to DNA during high-speed replication. This chain is DNA polymerase sliding clamp, found in Methanopyrus kandleri (strain AV19 / DSM 6324 / JCM 9639 / NBRC 100938).